Consider the following 152-residue polypeptide: Transcriptional regulator MraZ (152 aa).

SpoVT-AbrB domains follow at residues Ala5 to Glu52 and Ala81 to Thr124.

This sequence belongs to the MraZ family. As to quaternary structure, forms oligomers.

The protein localises to the cytoplasm. Its subcellular location is the nucleoid. Its function is as follows. Negatively regulates its own expression and that of the subsequent genes in the proximal part of the division and cell wall (dcw) gene cluster. Acts by binding directly to DNA. May also regulate the expression of genes outside the dcw cluster. The protein is Transcriptional regulator MraZ of Pectobacterium carotovorum subsp. carotovorum (strain PC1).